A 532-amino-acid polypeptide reads, in one-letter code: Fatty-acid amide hydrolase 2 (532 aa).

A helical transmembrane segment spans residues 11-31 (LFLLRALGFLIGLVGRAALVL). Residues Lys131 and Ser206 each act as charge relay system in the active site. The active-site Acyl-ester intermediate is the Ser230.

Belongs to the amidase family. Homodimer. In terms of tissue distribution, expressed in kidney, liver, lung, prostate, heart and ovary.

It localises to the membrane. The protein resides in the lipid droplet. The enzyme catalyses N-(5Z,8Z,11Z,14Z-eicosatetraenoyl)-ethanolamine + H2O = ethanolamine + (5Z,8Z,11Z,14Z)-eicosatetraenoate. It carries out the reaction (9Z)-octadecenamide + H2O = (9Z)-octadecenoate + NH4(+). It catalyses the reaction N-(9Z-octadecenoyl) ethanolamine + H2O = ethanolamine + (9Z)-octadecenoate. The catalysed reaction is N-hexadecanoylethanolamine + H2O = ethanolamine + hexadecanoate. Its activity is regulated as follows. Inhibited by O-aryl carbamates and alpha-keto heterocytes. Catalyzes the hydrolysis of endogenous amidated lipids like the sleep-inducing lipid oleamide ((9Z)-octadecenamide), the endocannabinoid anandamide (N-(5Z,8Z,11Z,14Z-eicosatetraenoyl)-ethanolamine), as well as other fatty amides, to their corresponding fatty acids, thereby regulating the signaling functions of these molecules. Hydrolyzes monounsaturated substrate anandamide preferentially as compared to polyunsaturated substrates. The protein is Fatty-acid amide hydrolase 2 (FAAH2) of Homo sapiens (Human).